The following is a 278-amino-acid chain: Tryptophan synthase alpha chain (278 aa).

Active-site proton acceptor residues include Glu-50 and Asp-61.

The protein belongs to the TrpA family. As to quaternary structure, tetramer of two alpha and two beta chains.

It carries out the reaction (1S,2R)-1-C-(indol-3-yl)glycerol 3-phosphate + L-serine = D-glyceraldehyde 3-phosphate + L-tryptophan + H2O. It functions in the pathway amino-acid biosynthesis; L-tryptophan biosynthesis; L-tryptophan from chorismate: step 5/5. Functionally, the alpha subunit is responsible for the aldol cleavage of indoleglycerol phosphate to indole and glyceraldehyde 3-phosphate. In Methylorubrum populi (strain ATCC BAA-705 / NCIMB 13946 / BJ001) (Methylobacterium populi), this protein is Tryptophan synthase alpha chain.